The following is a 337-amino-acid chain: Low-density lipoprotein receptor class A domain-containing protein 3 (337 aa).

An N-terminal signal peptide occupies residues 1–13; that stretch reads MWLLYLILGSVES. At 14–169 the chain is on the extracellular side; the sequence is QLLPGNNHTT…NQLLYYPSIT (156 aa). A glycan (N-linked (GlcNAc...) asparagine) is linked at asparagine 20. 3 consecutive LDL-receptor class A domains span residues 24–61, 66–103, and 108–144; these read ECNIPGNFMCSNGRCIPGGWQCDGNPDCFDESDEKECP, RCGPNFFPCTSGIHCIIARFQCNGFEDCPDGSDEENCT, and LCSNSRFHCKNHLCIDKSFVCDGQNNCLDNSDEEHCH. Disulfide bonds link cysteine 25/cysteine 38, cysteine 33/cysteine 51, cysteine 45/cysteine 60, cysteine 67/cysteine 80, cysteine 74/cysteine 93, cysteine 87/cysteine 102, cysteine 109/cysteine 121, cysteine 116/cysteine 134, and cysteine 128/cysteine 143. N-linked (GlcNAc...) asparagine glycosylation occurs at asparagine 101. Residues 170–190 form a helical membrane-spanning segment; the sequence is YTIIGSSVIFVLVVALLALVL. Residues 191–337 are Cytoplasmic-facing; that stretch reads HHQRKRNLMS…DDLPSTEVDV (147 aa). Residues 243–253 show a composition bias toward polar residues; it reads QQPVSVESPPS. The disordered stretch occupies residues 243 to 337; the sequence is QQPVSVESPP…DDLPSTEVDV (95 aa). Residues 291–303 show a composition bias toward low complexity; sequence RSRTGSSASAGST.

The protein belongs to the LDLR family.

It is found in the cell membrane. In Xenopus tropicalis (Western clawed frog), this protein is Low-density lipoprotein receptor class A domain-containing protein 3.